The following is a 240-amino-acid chain: Sulfite dehydrogenase subunit B (240 aa).

4Fe-4S ferredoxin-type domains are found at residues 4 to 34 (LALV…WAGP), 64 to 95 (TETV…KRPD), and 97 to 126 (GVVL…LDAQ). Positions 13, 16, 19, 23, 73, 76, 81, 85, 106, 109, 112, and 116 each coordinate [4Fe-4S] cluster.

As to quaternary structure, forms a heterotrimeric membrane-bound complex composed of a catalytic heterodimer (SoeAB) and a membrane anchor protein (SoeC). It depends on [4Fe-4S] cluster as a cofactor.

It localises to the cell inner membrane. In terms of biological role, part of the SoeABC complex that catalyzes the oxidation of sulfite to sulfate. SoeB is probably the electron transfer subunit. In Allochromatium vinosum (strain ATCC 17899 / DSM 180 / NBRC 103801 / NCIMB 10441 / D) (Chromatium vinosum), this protein is Sulfite dehydrogenase subunit B.